Reading from the N-terminus, the 437-residue chain is MQGGRVVLGLLCCLVAGVGSYTPWDISWAARGDPSAWSWGAEAHSRAVAGSHPVAVQCQEAQLVVTVHRDLFGTGRLINAADLTLGPAACKHSSLNAAHNTVTFAAGLHECGSVVQVTPDTLIYRTLINYDPSPASNPVIIRTNPAVIPIECHYPRRENVSSNAIRPTWSPFNSALSAEERLVFSLRLMSDDWSTERPFTGFQLGDILNIQAEVSTENHVPLRLFVDSCVAALSPDGDSSPHYAIIDFNGCLVDGRVDDTSSAFITPRPREDVLRFRIDVFRFAGDNRNLIYITCHLKVTPADQGPDPQNKACSFNKARNTWVPVEGSRDVCNCCETGNCEPPALSRRLNPMERWQSRRFRRDAGKEVAADVVIGPVLLSADPGAVGQQEEGGDGAAVMVPSVGTGLVCVAVAVALAAVGVAVGIARKGCTRTSAAV.

The signal sequence occupies residues 1–20; that stretch reads MQGGRVVLGLLCCLVAGVGS. At 21-405 the chain is on the extracellular side; the sequence is YTPWDISWAA…AAVMVPSVGT (385 aa). A ZP domain is found at 57–320; it reads QCQEAQLVVT…KACSFNKARN (264 aa). 2 cysteine pairs are disulfide-bonded: Cys58-Cys152 and Cys90-Cys111. An N-linked (GlcNAc...) asparagine glycan is attached at Asn159. O-linked (GalNAc...) threonine glycosylation is present at Thr168. Cystine bridges form between Cys229–Cys295, Cys251–Cys335, Cys313–Cys332, and Cys334–Cys340. Residues 361-437 constitute a propeptide, removed in mature form; the sequence is RRDAGKEVAA…KGCTRTSAAV (77 aa). The segment at 368 to 380 is extracellular hydrophobic patch; that stretch reads VAADVVIGPVLLS. Residues 406 to 426 form a helical membrane-spanning segment; the sequence is GLVCVAVAVALAAVGVAVGIA. The Cytoplasmic portion of the chain corresponds to 427-437; the sequence is RKGCTRTSAAV.

This sequence belongs to the ZP domain family. ZPC subfamily. Homodimer. Forms higher oligomers, once its C-terminus has been proteolytically removed. Forms heterooligomers with other zona pellucida glycoproteins. Proteolytically cleaved before the transmembrane segment to yield the secreted ectodomain incorporated in the zona pellucida. Post-translationally, N-glycosylated. In terms of processing, O-glycosylated. O-glycosylation at Thr-168 is important for efficient interaction with the sperm head. In terms of tissue distribution, detected in the ovarian perivitteline layer. Detected in granulosa cells in ovarian follicle (at protein level). Detected in granulosa cells in ovarian follicle.

It is found in the secreted. It localises to the extracellular space. The protein localises to the extracellular matrix. The protein resides in the cell membrane. In terms of biological role, component of the zona pellucida, which mediates species-specific sperm binding. Directly binds to sperm. Important for egg fertilization. In Gallus gallus (Chicken), this protein is Zona pellucida sperm-binding protein 3 (ZP3).